Consider the following 392-residue polypeptide: Enoyl-[acyl-carrier-protein] reductase [NADH] (392 aa).

NAD(+)-binding positions include 46–51 (GSSSGY), 72–73 (LE), 108–109 (DA), and 136–137 (VA). Position 225 (tyrosine 225) interacts with substrate. Tyrosine 235 functions as the Proton donor in the catalytic mechanism. NAD(+) is bound by residues lysine 244 and 273–275 (LVT).

It belongs to the TER reductase family. As to quaternary structure, monomer.

The enzyme catalyses a 2,3-saturated acyl-[ACP] + NAD(+) = a (2E)-enoyl-[ACP] + NADH + H(+). The protein operates within lipid metabolism; fatty acid biosynthesis. Its function is as follows. Involved in the final reduction of the elongation cycle of fatty acid synthesis (FAS II). Catalyzes the reduction of a carbon-carbon double bond in an enoyl moiety that is covalently linked to an acyl carrier protein (ACP). This is Enoyl-[acyl-carrier-protein] reductase [NADH] from Streptomyces avermitilis (strain ATCC 31267 / DSM 46492 / JCM 5070 / NBRC 14893 / NCIMB 12804 / NRRL 8165 / MA-4680).